The following is a 287-amino-acid chain: T-cell ecto-ADP-ribosyltransferase 1 (287 aa).

Residues 1–20 (MPSNNFKFFLTWWLTQQVTG) form the signal peptide. 3 disulfides stabilise this stretch: cysteine 41–cysteine 246, cysteine 80–cysteine 201, and cysteine 141–cysteine 193. One can recognise a TR mART core domain in the interval 61–241 (EELKLEWEKA…ISLDSPKRKK (181 aa)). Residues tyrosine 98 and arginine 146 each contribute to the NAD(+) site. Residues arginine 146 and serine 167 contribute to the active site. Asparagine 171 carries an N-linked (GlcNAc...) asparagine glycan. NAD(+) is bound at residue serine 202. The active site involves glutamate 209. Asparagine 256 is a glycosylation site (N-linked (GlcNAc...) asparagine). Serine 258 carries GPI-anchor amidated serine lipidation. Residues 259–287 (SLGSRESCVSLFLVVLLGLLVQQLTLAEP) constitute a propeptide, removed in mature form.

It belongs to the Arg-specific ADP-ribosyltransferase family. Post-translationally, it is proposed that in the absence of reducing agents, a disulfide bond is formed between Cys-80 and Cys-201, leading to a conformational change that reduces the catalytic rate of NAD glycohydrolysis. In terms of tissue distribution, expressed in spleen, intestine and thymus.

The protein resides in the cell membrane. The catalysed reaction is L-arginyl-[protein] + NAD(+) = N(omega)-(ADP-D-ribosyl)-L-arginyl-[protein] + nicotinamide + H(+). The enzyme catalyses NAD(+) + H2O = ADP-D-ribose + nicotinamide + H(+). Its function is as follows. Has both ADP-ribosyltransferase activity and thiol-dependent NAD(+) glycohydrolase activity. The polypeptide is T-cell ecto-ADP-ribosyltransferase 1 (Art2a) (Mus musculus (Mouse)).